A 300-amino-acid polypeptide reads, in one-letter code: Ribosomal protein L11 methyltransferase (300 aa).

Positions 152, 173, 195, and 234 each coordinate S-adenosyl-L-methionine.

It belongs to the methyltransferase superfamily. PrmA family.

Its subcellular location is the cytoplasm. It catalyses the reaction L-lysyl-[protein] + 3 S-adenosyl-L-methionine = N(6),N(6),N(6)-trimethyl-L-lysyl-[protein] + 3 S-adenosyl-L-homocysteine + 3 H(+). Functionally, methylates ribosomal protein L11. The chain is Ribosomal protein L11 methyltransferase from Cupriavidus necator (strain ATCC 17699 / DSM 428 / KCTC 22496 / NCIMB 10442 / H16 / Stanier 337) (Ralstonia eutropha).